Here is a 415-residue protein sequence, read N- to C-terminus: Succinate--CoA ligase [GDP-forming] subunit beta, mitochondrial (415 aa).

Residues Met-1 to Phe-19 constitute a mitochondrion transit peptide. The 231-residue stretch at Lys-28–Phe-258 folds into the ATP-grasp domain. GTP is bound by residues Gln-39, Gly-72 to Gly-74, and Val-130. The Mg(2+) site is built by Asn-227 and Asp-241. Residues Asn-292 and Gly-349–Val-351 each bind substrate.

The protein belongs to the succinate/malate CoA ligase beta subunit family. GTP-specific subunit beta subfamily. Heterodimer of an alpha and a beta subunit. The beta subunit determines specificity for GTP. Mg(2+) serves as cofactor.

It is found in the mitochondrion. The enzyme catalyses GTP + succinate + CoA = succinyl-CoA + GDP + phosphate. It functions in the pathway carbohydrate metabolism; tricarboxylic acid cycle; succinate from succinyl-CoA (ligase route): step 1/1. GTP-specific succinyl-CoA synthetase functions in the citric acid cycle (TCA), coupling the hydrolysis of succinyl-CoA to the synthesis of GTP and thus represents the only step of substrate-level phosphorylation in the TCA. The beta subunit provides nucleotide specificity of the enzyme and binds the substrate succinate, while the binding sites for coenzyme A and phosphate are found in the alpha subunit. The chain is Succinate--CoA ligase [GDP-forming] subunit beta, mitochondrial from Caenorhabditis elegans.